Consider the following 130-residue polypeptide: Small ribosomal subunit protein uS8 (130 aa).

This sequence belongs to the universal ribosomal protein uS8 family. In terms of assembly, part of the 30S ribosomal subunit. Contacts proteins S5 and S12.

One of the primary rRNA binding proteins, it binds directly to 16S rRNA central domain where it helps coordinate assembly of the platform of the 30S subunit. This is Small ribosomal subunit protein uS8 from Psychromonas ingrahamii (strain DSM 17664 / CCUG 51855 / 37).